The primary structure comprises 719 residues: Developmental regulator flbA (719 aa).

The span at 1–17 (MPTSISTAPLSQGSPPS) shows a compositional bias: polar residues. Disordered regions lie at residues 1–39 (MPTS…STAA), 117–141 (IGST…SRKA), and 155–190 (LSPP…AAER). Composition is skewed to low complexity over residues 123–135 (SSLR…GSLQ) and 158–171 (PLSD…QSSS). The segment at 214-411 (QTSSRLLRMT…QDGPNVKSSV (198 aa)) is fungal-DR. In terms of domain architecture, DEP spans 425-511 (GLVGVKMARE…SKNAIYAITE (87 aa)). The region spanning 540–685 (SNNARLNHIL…FLRDPKYSAI (146 aa)) is the RGS domain. The tract at residues 694-719 (LIGGGRSYSPTPGNVPERSMSRSQRS) is disordered.

Functionally, required for asexual sporulation and normal colony development. May be involved in brlA activation. Could play a regulatory role in controlling the flug-initiated signal transduction pathway that triggers the asexual reproduction. In Emericella nidulans (strain FGSC A4 / ATCC 38163 / CBS 112.46 / NRRL 194 / M139) (Aspergillus nidulans), this protein is Developmental regulator flbA (flbA).